Reading from the N-terminus, the 506-residue chain is Proline--tRNA ligase (506 aa).

It belongs to the class-II aminoacyl-tRNA synthetase family. ProS type 3 subfamily. In terms of assembly, homodimer.

It localises to the cytoplasm. The catalysed reaction is tRNA(Pro) + L-proline + ATP = L-prolyl-tRNA(Pro) + AMP + diphosphate. Catalyzes the attachment of proline to tRNA(Pro) in a two-step reaction: proline is first activated by ATP to form Pro-AMP and then transferred to the acceptor end of tRNA(Pro). The polypeptide is Proline--tRNA ligase (Rhodopirellula baltica (strain DSM 10527 / NCIMB 13988 / SH1)).